A 122-amino-acid polypeptide reads, in one-letter code: Insulin-like 3 (122 aa).

A signal peptide spans 1–15 (MRAPLLLMLLALGSA). Cystine bridges form between cysteine 29-cysteine 107, cysteine 41-cysteine 120, and cysteine 106-cysteine 111.

This sequence belongs to the insulin family. In terms of assembly, heterodimer of a B chain and an A chain linked by two disulfide bonds. In terms of tissue distribution, expressed exclusively in Leydig cells of the testis.

Its subcellular location is the secreted. Seems to play a role in testicular function. May be a trophic hormone with a role in testicular descent in fetal life. Is a ligand for LGR8 receptor. The sequence is that of Insulin-like 3 (Insl3) from Mus musculus (Mouse).